The primary structure comprises 166 residues: Ribonuclease H (166 aa).

Residues 10–151 (KRVRVDMFTD…ADELARRGTS (142 aa)) form the RNase H type-1 domain. Mg(2+) is bound by residues D19, E57, D79, and D143. Positions 145-157 (LARRGTSEARQGK) are enriched in basic and acidic residues. The interval 145 to 166 (LARRGTSEARQGKVDGQSSTIL) is disordered.

This sequence belongs to the RNase H family. In terms of assembly, monomer. The cofactor is Mg(2+).

The protein localises to the cytoplasm. It carries out the reaction Endonucleolytic cleavage to 5'-phosphomonoester.. Its function is as follows. Endonuclease that specifically degrades the RNA of RNA-DNA hybrids. The chain is Ribonuclease H from Rhodospirillum rubrum (strain ATCC 11170 / ATH 1.1.1 / DSM 467 / LMG 4362 / NCIMB 8255 / S1).